The following is a 161-amino-acid chain: MDMFEINITSVIQLMSFFLLLYILKKFLYDKYFEVMDARKEKIEGEIKKAEQLRKEAEELKKEAKGELIKIRESADSIIKKAKEEAEEIVNNAKKKAEAEAEKILVSAKEEIKNEREAMIKEVEQRVGEIAVVLAMKILKGTLDEKAKREYLMKILKEHEK.

A helical transmembrane segment spans residues Ser-10–Tyr-29.

Belongs to the ATPase B chain family. As to quaternary structure, F-type ATPases have 2 components, F(1) - the catalytic core - and F(0) - the membrane proton channel. F(1) has five subunits: alpha(3), beta(3), gamma(1), delta(1), epsilon(1). F(0) has three main subunits: a(1), b(2) and c(10-14). The alpha and beta chains form an alternating ring which encloses part of the gamma chain. F(1) is attached to F(0) by a central stalk formed by the gamma and epsilon chains, while a peripheral stalk is formed by the delta and b chains.

It is found in the cell inner membrane. F(1)F(0) ATP synthase produces ATP from ADP in the presence of a proton or sodium gradient. F-type ATPases consist of two structural domains, F(1) containing the extramembraneous catalytic core and F(0) containing the membrane proton channel, linked together by a central stalk and a peripheral stalk. During catalysis, ATP synthesis in the catalytic domain of F(1) is coupled via a rotary mechanism of the central stalk subunits to proton translocation. Its function is as follows. Component of the F(0) channel, it forms part of the peripheral stalk, linking F(1) to F(0). In Thermosipho melanesiensis (strain DSM 12029 / CIP 104789 / BI429), this protein is ATP synthase subunit b.